The following is a 161-amino-acid chain: Ribosomal RNA large subunit methyltransferase H (161 aa).

Residues leucine 78, glycine 110, and 129–134 (LGRMTF) contribute to the S-adenosyl-L-methionine site.

It belongs to the RNA methyltransferase RlmH family. Homodimer.

It localises to the cytoplasm. The catalysed reaction is pseudouridine(1915) in 23S rRNA + S-adenosyl-L-methionine = N(3)-methylpseudouridine(1915) in 23S rRNA + S-adenosyl-L-homocysteine + H(+). In terms of biological role, specifically methylates the pseudouridine at position 1915 (m3Psi1915) in 23S rRNA. This is Ribosomal RNA large subunit methyltransferase H from Symbiobacterium thermophilum (strain DSM 24528 / JCM 14929 / IAM 14863 / T).